Here is a 673-residue protein sequence, read N- to C-terminus: eEF1A lysine and N-terminal methyltransferase homolog (673 aa).

This sequence belongs to the methyltransferase superfamily.

It carries out the reaction L-lysyl-[protein] + S-adenosyl-L-methionine = N(6)-methyl-L-lysyl-[protein] + S-adenosyl-L-homocysteine + H(+). It catalyses the reaction N(6)-methyl-L-lysyl-[protein] + S-adenosyl-L-methionine = N(6),N(6)-dimethyl-L-lysyl-[protein] + S-adenosyl-L-homocysteine + H(+). The enzyme catalyses N-terminal glycyl-L-lysyl-L-glutamyl-[protein] + 3 S-adenosyl-L-methionine = N-terminal N,N,N-trimethyl-glycyl-L-lysyl-L-glutamyl-[protein] + 3 S-adenosyl-L-homocysteine + 3 H(+). Dual methyltransferase. It catalyzes N-terminal methylation of target proteins via its C-terminus. It catalyzes dimethylation on lysine residues of target proteins via its N-terminus. This is eEF1A lysine and N-terminal methyltransferase homolog from Drosophila melanogaster (Fruit fly).